We begin with the raw amino-acid sequence, 90 residues long: Small ribosomal subunit protein uS15 (90 aa).

This sequence belongs to the universal ribosomal protein uS15 family. As to quaternary structure, part of the 30S ribosomal subunit. Forms a bridge to the 50S subunit in the 70S ribosome, contacting the 23S rRNA.

One of the primary rRNA binding proteins, it binds directly to 16S rRNA where it helps nucleate assembly of the platform of the 30S subunit by binding and bridging several RNA helices of the 16S rRNA. In terms of biological role, forms an intersubunit bridge (bridge B4) with the 23S rRNA of the 50S subunit in the ribosome. In Campylobacter hominis (strain ATCC BAA-381 / DSM 21671 / CCUG 45161 / LMG 19568 / NCTC 13146 / CH001A), this protein is Small ribosomal subunit protein uS15.